We begin with the raw amino-acid sequence, 334 residues long: Heat-inducible transcription repressor HrcA (334 aa).

Belongs to the HrcA family.

Negative regulator of class I heat shock genes (grpE-dnaK-dnaJ and groELS operons). Prevents heat-shock induction of these operons. The chain is Heat-inducible transcription repressor HrcA from Acidovorax ebreus (strain TPSY) (Diaphorobacter sp. (strain TPSY)).